The sequence spans 218 residues: ER lumen protein-retaining receptor (218 aa).

Residues Met-1–Asn-2 lie on the Lumenal side of the membrane. A helical transmembrane segment spans residues Leu-3 to Ile-23. At Lys-24 to Ser-57 the chain is on the cytoplasmic side. The helical transmembrane segment at Leu-58–Ile-78 threads the bilayer. The Lumenal segment spans residues Ala-79–Lys-94. A helical transmembrane segment spans residues Ile-95–Ile-115. Residues Gly-116–Glu-123 are Cytoplasmic-facing. Residues Ile-124–Leu-144 form a helical membrane-spanning segment. Over Gln-145–Ala-152 the chain is Lumenal. A helical transmembrane segment spans residues Leu-153 to Ile-173. Over Tyr-174–Lys-184 the chain is Cytoplasmic. A helical transmembrane segment spans residues Ile-185–Ala-205. Over Lys-206–Gln-218 the chain is Lumenal.

It belongs to the ERD2 family.

Its subcellular location is the endoplasmic reticulum membrane. Its function is as follows. Required for the retention of luminal endoplasmic reticulum proteins. Determines the specificity of the luminal ER protein retention system. Also required for normal vesicular traffic through the Golgi. The chain is ER lumen protein-retaining receptor (kdelr) from Dictyostelium discoideum (Social amoeba).